Here is a 504-residue protein sequence, read N- to C-terminus: Tyrosine-protein kinase HCK (504 aa).

The N-myristoyl glycine moiety is linked to residue Gly2. Residue Cys3 is the site of S-palmitoyl cysteine attachment. Thr15 carries the post-translational modification Phosphothreonine. Tyr30 bears the Phosphotyrosine mark. The span at 34-49 shows a compositional bias: polar residues; sequence PTSTIKPGPNSNNRNT. The tract at residues 34 to 53 is disordered; it reads PTSTIKPGPNSNNRNTPGIG. An SH3 domain is found at 56 to 116; sequence SEDIIVVALY…PSNYVARVDS (61 aa). The 98-residue stretch at 122 to 219 folds into the SH2 domain; the sequence is WFFKGISRKD…GLCQKLSVPC (98 aa). Thr180 carries the phosphothreonine modification. Tyr187 carries the post-translational modification Phosphotyrosine. The 254-residue stretch at 240–493 folds into the Protein kinase domain; sequence LKLEKKLGAG…YIQSVLDDFY (254 aa). ATP-binding positions include 246–254 and Lys268; that span reads LGAGQFGEV. Asp359 acts as the Proton acceptor in catalysis. Tyr389 bears the Phosphotyrosine; by autocatalysis mark. The residue at position 440 (Ser440) is a Phosphoserine. Tyr500 carries the post-translational modification Phosphotyrosine.

The protein belongs to the protein kinase superfamily. Tyr protein kinase family. SRC subfamily. In terms of assembly, interacts with ADAM15. Interacts with FASLG. Interacts with ARRB1 and ARRB2. Interacts with FCGR1A; the interaction may be indirect. Interacts with IL6ST. Interacts (via SH3 domain) with ELMO1. Interacts (via SH3 domain) with TP73. Interacts with YAP1. Interacts with ABL1 and ITGB1, and thereby recruits ABL1 to activated ITGB1. Interacts (via SH2 domain) with FLT3 (tyrosine phosphorylated). Interacts with CBL. Interacts with VAV1, WAS and RAPGEF1. Interacts (via SH3 domain) with WDCP. Phosphorylated on several tyrosine residues. Autophosphorylated. Becomes rapidly phosphorylated upon activation of the immunoglobulin receptors FCGR1A and FCGR2A. Phosphorylation at Tyr-389 increases kinase activity. Phosphorylation at Tyr-500 inhibits kinase activity. Kinase activity is not required for phosphorylation at Tyr-500, suggesting that this site may be a target of other kinases. Post-translationally, ubiquitinated by CBL, leading to its degradation via the proteasome. In terms of processing, palmitoylation requires prior myristoylation. Palmitoylation is required for caveolar localization.

The protein localises to the cytoplasmic vesicle. It localises to the secretory vesicle. Its subcellular location is the cytoplasm. The protein resides in the cytosol. It is found in the cell membrane. The protein localises to the membrane. It localises to the caveola. Its subcellular location is the cell junction. The protein resides in the focal adhesion. It is found in the cytoskeleton. The protein localises to the golgi apparatus. It localises to the lysosome. Its subcellular location is the nucleus. It carries out the reaction L-tyrosyl-[protein] + ATP = O-phospho-L-tyrosyl-[protein] + ADP + H(+). Subject to autoinhibition, mediated by intramolecular interactions involving the SH2 and SH3 domains. Kinase activity is also regulated by phosphorylation at regulatory tyrosine residues. Phosphorylation at Tyr-389 is required for optimal activity. Phosphorylation at Tyr-500 inhibits kinase activity. Non-receptor tyrosine-protein kinase found in hematopoietic cells that transmits signals from cell surface receptors and plays an important role in the regulation of innate immune responses, including neutrophil, monocyte, macrophage and mast cell functions, phagocytosis, cell survival and proliferation, cell adhesion and migration. Acts downstream of receptors that bind the Fc region of immunoglobulins, such as FCGR1A and FCGR2A, but also CSF3R, PLAUR, the receptors for IFNG, IL2, IL6 and IL8, and integrins, such as ITGB1 and ITGB2. During the phagocytic process, mediates mobilization of secretory lysosomes, degranulation, and activation of NADPH oxidase to bring about the respiratory burst. Plays a role in the release of inflammatory molecules. Promotes reorganization of the actin cytoskeleton and actin polymerization, formation of podosomes and cell protrusions. Inhibits TP73-mediated transcription activation and TP73-mediated apoptosis. Phosphorylates CBL in response to activation of immunoglobulin gamma Fc region receptors. Phosphorylates ADAM15, BCR, ELMO1, FCGR2A, GAB1, GAB2, RAPGEF1, STAT5B, TP73, VAV1 and WAS. The polypeptide is Tyrosine-protein kinase HCK (HCK) (Macaca fascicularis (Crab-eating macaque)).